We begin with the raw amino-acid sequence, 382 residues long: Ribosomal RNA large subunit methyltransferase G (382 aa).

This sequence belongs to the methyltransferase superfamily. RlmG family.

It is found in the cytoplasm. It catalyses the reaction guanosine(1835) in 23S rRNA + S-adenosyl-L-methionine = N(2)-methylguanosine(1835) in 23S rRNA + S-adenosyl-L-homocysteine + H(+). Its function is as follows. Specifically methylates the guanine in position 1835 (m2G1835) of 23S rRNA. The sequence is that of Ribosomal RNA large subunit methyltransferase G from Pseudoalteromonas translucida (strain TAC 125).